The sequence spans 510 residues: GMP synthase [glutamine-hydrolyzing] (510 aa).

The Glutamine amidotransferase type-1 domain occupies 5–195 (LVLVIDFGGQ…LFKICGLKED (191 aa)). The active-site Nucleophile is C82. Residues H169 and E171 contribute to the active site. The region spanning 196–385 (WSMSSFAKEK…LGIPHKLVWR (190 aa)) is the GMPS ATP-PPase domain. An ATP-binding site is contributed by 223-229 (SGGVDSS).

As to quaternary structure, homodimer.

It catalyses the reaction XMP + L-glutamine + ATP + H2O = GMP + L-glutamate + AMP + diphosphate + 2 H(+). It functions in the pathway purine metabolism; GMP biosynthesis; GMP from XMP (L-Gln route): step 1/1. Catalyzes the synthesis of GMP from XMP. This chain is GMP synthase [glutamine-hydrolyzing], found in Clostridium acetobutylicum (strain ATCC 824 / DSM 792 / JCM 1419 / IAM 19013 / LMG 5710 / NBRC 13948 / NRRL B-527 / VKM B-1787 / 2291 / W).